We begin with the raw amino-acid sequence, 317 residues long: F-box protein FBW2 (317 aa).

Positions 7 to 54 (FRHWDELIPDALGLIFSHLPLQEVLTVVPRVCKAWNRAVTGPYCWQEI) constitute an F-box domain.

As to quaternary structure, part of a SCF (SKP1-cullin-F-box) protein ligase complex. Interacts with CUL1, CUL2 and SPK1B/ASK2.

It localises to the nucleus. It functions in the pathway protein modification; protein ubiquitination. In terms of biological role, component of SCF(ASK-cullin-F-box) E3 ubiquitin ligase complexes, which may mediate the ubiquitination and subsequent proteasomal degradation of target proteins. This chain is F-box protein FBW2 (FBW2), found in Arabidopsis thaliana (Mouse-ear cress).